Reading from the N-terminus, the 259-residue chain is tRNA pseudouridine synthase A (259 aa).

Asp-51 acts as the Nucleophile in catalysis. Tyr-109 provides a ligand contact to substrate.

The protein belongs to the tRNA pseudouridine synthase TruA family. As to quaternary structure, homodimer.

The enzyme catalyses uridine(38/39/40) in tRNA = pseudouridine(38/39/40) in tRNA. Functionally, formation of pseudouridine at positions 38, 39 and 40 in the anticodon stem and loop of transfer RNAs. This Nitrosococcus oceani (strain ATCC 19707 / BCRC 17464 / JCM 30415 / NCIMB 11848 / C-107) protein is tRNA pseudouridine synthase A.